The sequence spans 310 residues: Tagatose-6-phosphate kinase (310 aa).

It belongs to the carbohydrate kinase PfkB family. LacC subfamily.

It carries out the reaction D-tagatofuranose 6-phosphate + ATP = D-tagatofuranose 1,6-bisphosphate + ADP + H(+). The protein operates within carbohydrate metabolism; D-tagatose 6-phosphate degradation; D-glyceraldehyde 3-phosphate and glycerone phosphate from D-tagatose 6-phosphate: step 1/2. This is Tagatose-6-phosphate kinase from Staphylococcus epidermidis (strain ATCC 12228 / FDA PCI 1200).